A 364-amino-acid chain; its full sequence is Adenine deaminase (364 aa).

Zn(2+) contacts are provided by H25, H27, and H221. E224 functions as the Proton donor in the catalytic mechanism. Residue D301 coordinates Zn(2+). Position 302 (D302) interacts with substrate.

The protein belongs to the metallo-dependent hydrolases superfamily. Adenosine and AMP deaminases family. Adenine deaminase type 2 subfamily. Requires Zn(2+) as cofactor.

The protein localises to the cytoplasm. Its subcellular location is the nucleus. It carries out the reaction adenine + H2O + H(+) = hypoxanthine + NH4(+). Functionally, catalyzes the hydrolytic deamination of adenine to hypoxanthine. Plays an important role in the purine salvage pathway and in nitrogen catabolism. Has no activity with adenosine as a substrate. This Emericella nidulans (strain FGSC A4 / ATCC 38163 / CBS 112.46 / NRRL 194 / M139) (Aspergillus nidulans) protein is Adenine deaminase (aah1).